The chain runs to 483 residues: Protein adenylyltransferase Fic (483 aa).

Residues 20-42 (AFFFIAGSLATFVFHALTSSSSV) form a helical membrane-spanning segment. TPR repeat units lie at residues 107-140 (ALGA…APKH) and 141-175 (PEVL…SPSN). Residues 232–237 (SVGIEG) carry the Inhibitory (S/T)XXXE(G/N) motif motif. ATP is bound by residues Glu-236 and 317 to 320 (VGGH). One can recognise a Fido domain in the interval 286–421 (ITLKDILELH…IRPFVRFIAD (136 aa)). His-364 is a catalytic residue. Residues 368-375 (DGNGRTSR), 400-401 (YY), and Asn-408 contribute to the ATP site. The interval 464 to 483 (SAPEPYESGSGLDSGVNGMP) is disordered.

This sequence belongs to the fic family. Homodimer.

The protein localises to the membrane. It carries out the reaction L-tyrosyl-[protein] + ATP = O-(5'-adenylyl)-L-tyrosyl-[protein] + diphosphate. It catalyses the reaction L-threonyl-[protein] + ATP = 3-O-(5'-adenylyl)-L-threonyl-[protein] + diphosphate. The enzyme catalyses 3-O-(5'-adenylyl)-L-threonyl-[protein] + H2O = L-threonyl-[protein] + AMP + H(+). Its activity is regulated as follows. The side chain of Glu-236 determines which of the two opposing activities (AMPylase or de-AMPylase) will take place. In response to endoplasmic reticulum stress, mediates de-AMPylase activity. Adenylyltransferase activity is inhibited by the inhibitory helix present at the N-terminus: Glu-236 binds ATP and competes with ATP-binding at Arg-375, thereby preventing adenylyltransferase activity. In unstressed cells, disengagement of Glu-236 promotes adenylyltransferase activity. Activation dissociates ATP-binding from Glu-236, allowing ordered binding of the entire ATP moiety with the alpha-phosphate in an orientation that is productive for accepting an incoming target hydroxyl side chain. Protein that can both mediate the addition of adenosine 5'-monophosphate (AMP) to specific residues of target proteins (AMPylation), and the removal of the same modification from target proteins (de-AMPylation), depending on the context. The side chain of Glu-236 determines which of the two opposing activities (AMPylase or de-AMPylase) will take place. Acts as a key regulator of the unfolded protein response (UPR) by mediating AMPylation or de-AMPylation of Hsc70-3/BiP. In unstressed cells, acts as an adenylyltransferase by mediating AMPylation of Hsc70-3/BiP at 'Thr-518', thereby inactivating it. In response to endoplasmic reticulum stress, acts as a phosphodiesterase by mediating removal of ATP (de-AMPylation) from Hsc70-3/BiP at 'Thr-518', leading to restore HSPA5/BiP activity. The protein is Protein adenylyltransferase Fic of Drosophila grimshawi (Hawaiian fruit fly).